Reading from the N-terminus, the 353-residue chain is Photosystem II D2 protein (353 aa).

Thr2 is subject to N-acetylthreonine. The residue at position 2 (Thr2) is a Phosphothreonine. The helical transmembrane segment at 41 to 61 (CAYFALGGWFTGTTFVTSWYT) threads the bilayer. Residue His118 coordinates chlorophyll a. A helical transmembrane segment spans residues 125 to 141 (GFMLRQFELARPVQLRP). Pheophytin a contacts are provided by Gln130 and Asn143. A helical membrane pass occupies residues 153-166 (VFLSVFLIYPLGQS). His198 contributes to the chlorophyll a binding site. A helical transmembrane segment spans residues 208-228 (AVLLCAIHGATVENTLFEDGD). The a plastoquinone site is built by His215 and Phe262. Residue His215 coordinates Fe cation. A Fe cation-binding site is contributed by His269. The helical transmembrane segment at 279-295 (GLWMSAIGVVGLALNLR) threads the bilayer.

The protein belongs to the reaction center PufL/M/PsbA/D family. In terms of assembly, PSII is composed of 1 copy each of membrane proteins PsbA, PsbB, PsbC, PsbD, PsbE, PsbF, PsbH, PsbI, PsbJ, PsbK, PsbL, PsbM, PsbT, PsbX, PsbY, PsbZ, Psb30/Ycf12, at least 3 peripheral proteins of the oxygen-evolving complex and a large number of cofactors. It forms dimeric complexes. The cofactor is The D1/D2 heterodimer binds P680, chlorophylls that are the primary electron donor of PSII, and subsequent electron acceptors. It shares a non-heme iron and each subunit binds pheophytin, quinone, additional chlorophylls, carotenoids and lipids. There is also a Cl(-1) ion associated with D1 and D2, which is required for oxygen evolution. The PSII complex binds additional chlorophylls, carotenoids and specific lipids.. Post-translationally, only phosphorylated in mesophyll cells, phosphorylation increases when cells are grown under high rather than low light regimes (70 vs 900 umol photons/m-2/s).

The protein resides in the plastid. It localises to the chloroplast thylakoid membrane. It carries out the reaction 2 a plastoquinone + 4 hnu + 2 H2O = 2 a plastoquinol + O2. Its function is as follows. Photosystem II (PSII) is a light-driven water:plastoquinone oxidoreductase that uses light energy to abstract electrons from H(2)O, generating O(2) and a proton gradient subsequently used for ATP formation. It consists of a core antenna complex that captures photons, and an electron transfer chain that converts photonic excitation into a charge separation. The D1/D2 (PsbA/PsbD) reaction center heterodimer binds P680, the primary electron donor of PSII as well as several subsequent electron acceptors. D2 is needed for assembly of a stable PSII complex. The polypeptide is Photosystem II D2 protein (Zea mays (Maize)).